A 199-amino-acid polypeptide reads, in one-letter code: NAD(P)H dehydrogenase (quinone) (199 aa).

The 187-residue stretch at 4 to 190 (VLVLYYSMYG…AIARFQGKHV (187 aa)) folds into the Flavodoxin-like domain. Residues 10–15 (SMYGHI) and 79–81 (TRF) each bind FMN. An NAD(+)-binding site is contributed by Tyr12. Trp99 is a binding site for substrate. Residues 114–119 (STGTGG) and His134 each bind FMN.

The protein belongs to the WrbA family. FMN serves as cofactor.

It carries out the reaction a quinone + NADH + H(+) = a quinol + NAD(+). It catalyses the reaction a quinone + NADPH + H(+) = a quinol + NADP(+). This chain is NAD(P)H dehydrogenase (quinone), found in Marinobacter nauticus (strain ATCC 700491 / DSM 11845 / VT8) (Marinobacter aquaeolei).